The primary structure comprises 313 residues: Ribosomal protein L11 methyltransferase (313 aa).

Residues Thr-161, Gly-182, Asp-204, and Asn-246 each contribute to the S-adenosyl-L-methionine site.

This sequence belongs to the methyltransferase superfamily. PrmA family.

It localises to the cytoplasm. The enzyme catalyses L-lysyl-[protein] + 3 S-adenosyl-L-methionine = N(6),N(6),N(6)-trimethyl-L-lysyl-[protein] + 3 S-adenosyl-L-homocysteine + 3 H(+). Its function is as follows. Methylates ribosomal protein L11. The sequence is that of Ribosomal protein L11 methyltransferase from Acetivibrio thermocellus (strain ATCC 27405 / DSM 1237 / JCM 9322 / NBRC 103400 / NCIMB 10682 / NRRL B-4536 / VPI 7372) (Clostridium thermocellum).